Reading from the N-terminus, the 414-residue chain is MSFANMFNKLSGQPESYEKKSLYRFGRTLGAGTYGIVREADCSSGKVAVKIILKRNVRGNERMVYDELDLLQKLNHPHIVHFVDWFESKDKFYIVTQLATGGELFDRICEYGKFTEKDASQTIRQVLDAVNYLHQRNIVHRDLKPENLLYLTRDLDSQLVLADFGIAKMLDNPAEVLTSMAGSFGYAAPEVMLKQGHGKAVDIWSLGVITYTLLCGYSPFRSENLTDLIEECRSGRVVFHERYWKDVSKDAKDFILSLLQVDPAQRPTSEEALKHPWLKGESASDRDLLPEIRAYIARSRLKRGIEIIKLANRIEALKMQEEDEEDIPSAVDVQASEASDKSGLSPFPALSTENSNTHPASTGNGESGGTKKRSLSKIARGAIFREVVLAKVREMKENEEREKVEREARERAHS.

In terms of domain architecture, Protein kinase spans 23-278; sequence YRFGRTLGAG…SEEALKHPWL (256 aa). ATP-binding positions include 29 to 37 and Lys-50; that span reads LGAGTYGIV. The active-site Proton acceptor is Asp-142. The autoinhibitory domain stretch occupies residues 278–314; sequence LKGESASDRDLLPEIRAYIARSRLKRGIEIIKLANRI. Positions 293 to 315 are calmodulin-binding; it reads RAYIARSRLKRGIEIIKLANRIE. 2 disordered regions span residues 320–375 and 394–414; these read QEED…KRSL and EMKE…RAHS. Positions 351–364 are enriched in polar residues; that stretch reads STENSNTHPASTGN.

Belongs to the protein kinase superfamily. CAMK Ser/Thr protein kinase family. CaMK subfamily. Monomer. Post-translationally, autophosphorylated in a calcium/calmodulin-dependent manner.

It carries out the reaction L-seryl-[protein] + ATP = O-phospho-L-seryl-[protein] + ADP + H(+). The enzyme catalyses L-threonyl-[protein] + ATP = O-phospho-L-threonyl-[protein] + ADP + H(+). Activated by Ca(2+)/calmodulin. Binding of calmodulin may relieve intrasteric autoinhibition. Functionally, calcium/calmodulin-dependent protein kinase. Required in nuclear division cycle for progression from G2 to mitosis. Required for hyphal growth. The chain is Calcium/calmodulin-dependent protein kinase cmkA (cmkA) from Emericella nidulans (strain FGSC A4 / ATCC 38163 / CBS 112.46 / NRRL 194 / M139) (Aspergillus nidulans).